A 214-amino-acid chain; its full sequence is External core antigen (214 aa).

The first 19 residues, 1–19 (MQLFHLCLIISCTCPTVQA), serve as a signal peptide directing secretion. The tract at residues 25-27 (GWL) is HBEAG. The interval 165 to 214 (NAPILSTLPETTVVRRRDRGRSPRRRTPSPRRRRSQSPRRRRSQSRESQC) is disordered. A compositionally biased stretch (basic residues) spans 178-207 (VRRRDRGRSPRRRTPSPRRRRSQSPRRRRS). A 1; half-length repeat occupies 186–192 (SPRRRTP). The 3 X 8 AA repeats of S-P-R-R-R-R-S-Q stretch occupies residues 186–208 (SPRRRTPSPRRRRSQSPRRRRSQ). Residues 186–214 (SPRRRTPSPRRRRSQSPRRRRSQSRESQC) constitute a propeptide that is removed on maturation. Repeat copies occupy residues 193–200 (SPRRRRSQ) and 201–208 (SPRRRRSQ).

This sequence belongs to the orthohepadnavirus precore antigen family. Homodimerizes. Post-translationally, phosphorylated. Cleaved by host furin.

Its subcellular location is the secreted. It is found in the host nucleus. May regulate immune response to the intracellular capsid in acting as a T-cell tolerogen, by having an immunoregulatory effect which prevents destruction of infected cells by cytotoxic T-cells. This immune regulation may predispose to chronicity during perinatal infections and prevent severe liver injury during adult infections. This chain is External core antigen, found in Homo sapiens (Human).